A 394-amino-acid polypeptide reads, in one-letter code: Endothelial cell-selective adhesion molecule (394 aa).

An N-terminal signal peptide occupies residues 1–29; sequence MILQAGTPETSLLRVLFLGLSTLAAFSRA. Topologically, residues 30–251 are extracellular; the sequence is QMELHVPPGL…LDVMTGSKAA (222 aa). In terms of domain architecture, Ig-like V-type spans 37–146; the sequence is PGLNKLEAVE…EGKSIGHSIK (110 aa). N-linked (GlcNAc...) asparagine glycans are attached at residues Asn111, Asn172, Asn216, and Asn239. The 85-residue stretch at 159–243 folds into the Ig-like C2-type domain; sequence PSCSLQGVPY…GFAKCNVTLD (85 aa). A disulfide bond links Cys177 and Cys227. Residues 252-272 form a helical membrane-spanning segment; it reads VVAGAVVGTFVGLVLIAGLVL. The Cytoplasmic segment spans residues 273–394; that stretch reads LYQRRSKTLE…PAQSQAGSLV (122 aa). The residue at position 304 (Ser304) is a Phosphoserine. Polar residues-rich tracts occupy residues 304–318 and 335–347; these read SDTI…SVTS and FTPT…QALS. Positions 304 to 372 are disordered; it reads SDTISKNGTL…SLTPGGVSSS (69 aa). Phosphothreonine is present on residues Thr336 and Thr338. 4 positions are modified to phosphoserine: Ser340, Ser343, Ser348, and Ser375.

As to quaternary structure, interacts with MAGI1. Highly expressed in the heart and lung. Weakly expressed in the kidney and skin. Expression is restricted to the vascular endothelial cells. Expressed in the kidney, heart and tongue (at protein level). Also expressed on megakaryocytes and activated platelets.

The protein localises to the cell junction. It is found in the adherens junction. The protein resides in the tight junction. It localises to the cell membrane. In terms of biological role, can mediate aggregation most likely through a homophilic molecular interaction. This is Endothelial cell-selective adhesion molecule (Esam) from Mus musculus (Mouse).